The primary structure comprises 456 residues: Trigger factor (456 aa).

The 86-residue stretch at 192–277 (GDTVVIDFVG…IHEVKTKEVP (86 aa)) folds into the PPIase FKBP-type domain.

It belongs to the FKBP-type PPIase family. Tig subfamily.

It localises to the cytoplasm. It carries out the reaction [protein]-peptidylproline (omega=180) = [protein]-peptidylproline (omega=0). Involved in protein export. Acts as a chaperone by maintaining the newly synthesized protein in an open conformation. Functions as a peptidyl-prolyl cis-trans isomerase. This is Trigger factor from Streptococcus pyogenes serotype M2 (strain MGAS10270).